The chain runs to 138 residues: Acidic phospholipase A2 pgPLA 1b/pgPLA 2b (138 aa).

Positions 1–16 (MRTLWIMAVLLVGVKG) are cleaved as a signal peptide. Intrachain disulfides connect Cys-42–Cys-131, Cys-44–Cys-60, Cys-59–Cys-111, Cys-65–Cys-138, Cys-66–Cys-104, Cys-73–Cys-97, and Cys-91–Cys-102. Ca(2+)-binding residues include Tyr-43, Gly-45, and Gly-47. The active site involves His-63. Asp-64 lines the Ca(2+) pocket. The active site involves Asp-105.

Belongs to the phospholipase A2 family. Group II subfamily. D49 sub-subfamily. It depends on Ca(2+) as a cofactor. Expressed by the venom gland.

It localises to the secreted. The enzyme catalyses a 1,2-diacyl-sn-glycero-3-phosphocholine + H2O = a 1-acyl-sn-glycero-3-phosphocholine + a fatty acid + H(+). PLA2 catalyzes the calcium-dependent hydrolysis of the 2-acyl groups in 3-sn-phosphoglycerides. This is Acidic phospholipase A2 pgPLA 1b/pgPLA 2b from Protobothrops flavoviridis (Habu).